We begin with the raw amino-acid sequence, 368 residues long: Glycolate oxidase 2 (368 aa).

The 360-residue stretch at 1–360 folds into the FMN hydroxy acid dehydrogenase domain; the sequence is MALVTNVCEY…TRGHVVTESD (360 aa). FMN-binding positions include 78–80, S107, 128–130, and T156; these read PTA and QLS. Residue R165 coordinates glyoxylate. 2 residues coordinate FMN: K231 and S253. 2 residues coordinate glyoxylate: H255 and R258. The active-site Proton acceptor is H255. FMN is bound by residues 286-290 and 309-310; these read DSGFR and GR. Positions 366–368 match the Microbody targeting signal motif; the sequence is SRL.

This sequence belongs to the FMN-dependent alpha-hydroxy acid dehydrogenase family. Homotetramer. Requires FMN as cofactor.

It is found in the peroxisome. The catalysed reaction is glycolate + O2 = glyoxylate + H2O2. It participates in photosynthesis; photorespiration; glycine from 2-phosphoglycolate: step 2/3. Functionally, catalyzes the oxidation of glycolate to glyoxylate, with a reduction of O2 to H2O2. Is a key enzyme in photorespiration in green plants. This chain is Glycolate oxidase 2 (GLO2), found in Oryza sativa subsp. indica (Rice).